Consider the following 342-residue polypeptide: Vancomycin B-type resistance protein VanB (342 aa).

ATP contacts are provided by residues Lys-132, 168–170 (FVK), 176–177 (SS), 206–213 (EQAISGCE), and Phe-240. The ATP-grasp domain maps to 136–337 (YILTKNAGIA…LPALIDSLIT (202 aa)). His-243 serves as a coordination point for substrate. An ATP-binding site is contributed by 303 to 304 (NE). Glu-304 and Asn-306 together coordinate Mg(2+).

Belongs to the D-alanine--D-alanine ligase family. Requires Mg(2+) as cofactor. Mn(2+) is required as a cofactor.

The protein localises to the cell membrane. The catalysed reaction is (R)-lactate + D-alanine + ATP = D-alanyl-(R)-lactate + ADP + phosphate. Required for high-level resistance to glycopeptides antibiotics. D-Ala--D-Ala ligase of altered specificity which catalyzes ester bond formation between D-Ala and various D-hydroxy acids; producing a peptidoglycan which does not terminate in D-alanine but in D-lactate, thus preventing vancomycin binding. This Enterococcus faecalis (strain ATCC 700802 / V583) protein is Vancomycin B-type resistance protein VanB (vanB).